We begin with the raw amino-acid sequence, 357 residues long: Protein-glutamate methylesterase/protein-glutamine glutaminase (357 aa).

The region spanning 3 to 120 (RVLVVDDSAF…SIDLYKVRDM (118 aa)) is the Response regulatory domain. At Asp-54 the chain carries 4-aspartylphosphate. The CheB-type methylesterase domain maps to 161-355 (FRAGKQLICI…AAIMTYMKKE (195 aa)). Catalysis depends on residues Ser-173, His-200, and Asp-296.

Belongs to the CheB family. Phosphorylated by CheA. Phosphorylation of the N-terminal regulatory domain activates the methylesterase activity.

It is found in the cytoplasm. It carries out the reaction [protein]-L-glutamate 5-O-methyl ester + H2O = L-glutamyl-[protein] + methanol + H(+). The enzyme catalyses L-glutaminyl-[protein] + H2O = L-glutamyl-[protein] + NH4(+). In terms of biological role, involved in chemotaxis. Part of a chemotaxis signal transduction system that modulates chemotaxis in response to various stimuli. Catalyzes the demethylation of specific methylglutamate residues introduced into the chemoreceptors (methyl-accepting chemotaxis proteins or MCP) by CheR. Also mediates the irreversible deamidation of specific glutamine residues to glutamic acid. This Bacillus licheniformis (strain ATCC 14580 / DSM 13 / JCM 2505 / CCUG 7422 / NBRC 12200 / NCIMB 9375 / NCTC 10341 / NRRL NRS-1264 / Gibson 46) protein is Protein-glutamate methylesterase/protein-glutamine glutaminase.